The chain runs to 1004 residues: MAQLVDEIVFQSGVKLHNRIVMAPMTIQSAFFDGGVTQEMINYYAARSGGAGAIIVESAFVENYGRAFPGALGIDTDSKIAGLTKLADAIKAKGSKAILQIYHAGRMANPEFNGGHQPISASPVAALRDNAETPLEMTKEQIEEMIERFGDAVNRAILAGFDGVEIHGANTYLIQQFFSPHSNRRNDKWGGNIERRTSFPLAVLAKTKQVAEQHNKSDFIIGYRFSPEEIEQPGIRFDDTMFLLDKLATHGLDYFHFSMGSWLRNSIVTPEDQEPLIDKYRKLQSESVAKVPVIGVGGIAQRKDAENALEQGYDMVSVGKGYLVEPTWANKALNDETCAEFADIAQQEALQIPTPLWEIMDYMIVDSAAEALKHQRIKELQNVPIKFNSGEYTAYGRGHNGDLPVTVTFSEDKILDIVVDSSKESDGIANPAFERIPQQILDGQTLNIDVISGATVSSQAVLDGVSNAVDLAGGNSEALRCKAKEAVAWSSKTIEETVDIVVVGGGGAGLSATLTALDKGKSVVLLEKFPAIGGNTVRTGGWVNAAEPKWQGDFPALPGEKETLMLLAKTAESEFSGEYLEDFKVLKAQLDGYFTDLENGKQYLFDSVELHRIQTYLGGKRTDLNGESIYGQYDLVETLTSRSMESIDWLSEKGIDFDRSVVEIPVGALWRRAHKPKRPKGVEFIDKLSKRIQEQNGRIITDTRATDLMVDNGKVVGIKAVQADGTELILHVNHGVVLASGGFGANTQMIKKYNTYWKEIADDIKTTNSPALVGDGIEIGEKAGAELVGMGFVQLMPVGDPKSGALLTGLIVPPENFVFVNKQGKRFVDECGSRDVLSEAFFDNGGLIYMIADENIRQTAANTSDETIEREIKEGIIIQADTLEELAEKIGVPTQELTNTIAQYNACVDAGQDPEFHKSAFGLKVEKAPFYATPRQPSVHHTMGGLKIDTKARVIGKDGEVIQGLYAAGEVTGGIHAGNRLGGNALIDIFTYGRIAGESASDLV.

Residue Thr455 is modified to FMN phosphoryl threonine. FAD-binding residues include Ala508, Glu527, Asn535, Thr536, Gly540, Gly541, and Asp775. The Proton donor role is filled by Arg834. The FAD site is built by His941, Glu970, Ala985, and Leu986.

Belongs to the FAD-dependent oxidoreductase 2 family. FRD/SDH subfamily. Requires FAD as cofactor. The cofactor is FMN. Is flavinylated on Thr-455 by ApbE, encoded in a neighboring gene. Flavinylation is essential for catalytic activity.

The enzyme catalyses acrylate + NADH + H(+) = propanoate + NAD(+). Functionally, catalyzes the NADH-dependent reduction of acrylate to propanoate. The principal role of ARD in Vibrio seems to be the energy-saving detoxification of acrylate coming from the environment. May also use acrylate as the terminal electron acceptor for NADH regeneration at oxygen deficiency. NADPH cannot replace NADH as the electron donor. Is also able to reduce methacrylate in vitro, but with a much lower efficiency. This is NADH:acrylate oxidoreductase from Vibrio harveyi (Beneckea harveyi).